The chain runs to 257 residues: Pyridoxal phosphate homeostasis protein (257 aa).

At Lys47 the chain carries N6-(pyridoxal phosphate)lysine.

The protein belongs to the pyridoxal phosphate-binding protein YggS/PROSC family.

Functionally, pyridoxal 5'-phosphate (PLP)-binding protein, which is involved in PLP homeostasis. In Mycobacterium leprae (strain TN), this protein is Pyridoxal phosphate homeostasis protein.